A 278-amino-acid chain; its full sequence is Large ribosomal subunit protein uL2 (278 aa).

2 disordered regions span residues 29 to 53 (PVKS…TSRG) and 221 to 278 (RGVA…KKKR). Over residues 269-278 (IRSRHAKKKR) the composition is skewed to basic residues.

It belongs to the universal ribosomal protein uL2 family. Part of the 50S ribosomal subunit. Forms a bridge to the 30S subunit in the 70S ribosome.

Functionally, one of the primary rRNA binding proteins. Required for association of the 30S and 50S subunits to form the 70S ribosome, for tRNA binding and peptide bond formation. It has been suggested to have peptidyltransferase activity; this is somewhat controversial. Makes several contacts with the 16S rRNA in the 70S ribosome. In Erythrobacter litoralis (strain HTCC2594), this protein is Large ribosomal subunit protein uL2.